A 416-amino-acid polypeptide reads, in one-letter code: Thyroid hormone receptor alpha-A (416 aa).

A compositionally biased stretch (polar residues) spans 1 to 13; that stretch reads MEPMSNKQDSNSS. Residues 1–37 are disordered; that stretch reads MEPMSNKQDSNSSEGDEKGWPDVPKRKRKNSQCSMKS. Residues 1–58 are modulating; sequence MEPMSNKQDSNSSEGDEKGWPDVPKRKRKNSQCSMKSMSALSVSVPGYIPSYLEKDEP. The span at 15–24 shows a compositional bias: basic and acidic residues; that stretch reads GDEKGWPDVP. NR C4-type zinc fingers lie at residues 59-79 and 97-121; these read CVVCGDKATGYHYRCITCEGC and CKYEGCCIIDKITRNQCQLCRFKKC. Residues 59-126 constitute a DNA-binding region (nuclear receptor); sequence CVVCGDKATG…RFKKCISVGM (68 aa). Positions 169–413 constitute an NR LBD domain; sequence AEWELIRMAT…PPLFLEVFED (245 aa).

It belongs to the nuclear hormone receptor family. NR1 subfamily.

Its subcellular location is the nucleus. High affinity receptor for triiodothyronine. This Paralichthys olivaceus (Bastard halibut) protein is Thyroid hormone receptor alpha-A (thra1).